Consider the following 183-residue polypeptide: Translocon-associated protein subunit beta (183 aa).

Positions 1–17 (MRLLAVVVLALLAVSQA) are cleaved as a signal peptide. Over 18 to 146 (EEGARLLASK…REFDRRFSPH (129 aa)) the chain is Lumenal. N-linked (GlcNAc...) (high mannose) asparagine glycosylation occurs at asparagine 88. Asparagine 104 is a glycosylation site (N-linked (GlcNAc...) asparagine). Residues 147 to 167 (FLDWAAFGVMTLPSIGIPLLL) traverse the membrane as a helical segment. Topologically, residues 168–183 (WYSSKRKYDTPKPKKN) are cytoplasmic.

The protein belongs to the TRAP-beta family. In terms of assembly, heterotetramer of TRAP-alpha, TRAP-beta, TRAP-delta and TRAP-gamma. Interacts with STING1.

Its subcellular location is the endoplasmic reticulum membrane. TRAP proteins are part of a complex whose function is to bind calcium to the ER membrane and thereby regulate the retention of ER resident proteins. This Mus musculus (Mouse) protein is Translocon-associated protein subunit beta (Ssr2).